We begin with the raw amino-acid sequence, 676 residues long: tRNA 5-methylaminomethyl-2-thiouridine biosynthesis bifunctional protein MnmC (676 aa).

Residues 1–241 form a tRNA (mnm(5)s(2)U34)-methyltransferase region; sequence MFTVTPAKIY…KRECLCGIKN (241 aa). The FAD-dependent cmnm(5)s(2)U34 oxidoreductase stretch occupies residues 268 to 676; that stretch reads IGGGIASLFT…RKLLKGTEIK (409 aa).

The protein in the N-terminal section; belongs to the methyltransferase superfamily. tRNA (mnm(5)s(2)U34)-methyltransferase family. It in the C-terminal section; belongs to the DAO family. It depends on FAD as a cofactor.

It localises to the cytoplasm. The enzyme catalyses 5-aminomethyl-2-thiouridine(34) in tRNA + S-adenosyl-L-methionine = 5-methylaminomethyl-2-thiouridine(34) in tRNA + S-adenosyl-L-homocysteine + H(+). Catalyzes the last two steps in the biosynthesis of 5-methylaminomethyl-2-thiouridine (mnm(5)s(2)U) at the wobble position (U34) in tRNA. Catalyzes the FAD-dependent demodification of cmnm(5)s(2)U34 to nm(5)s(2)U34, followed by the transfer of a methyl group from S-adenosyl-L-methionine to nm(5)s(2)U34, to form mnm(5)s(2)U34. This Histophilus somni (strain 2336) (Haemophilus somnus) protein is tRNA 5-methylaminomethyl-2-thiouridine biosynthesis bifunctional protein MnmC.